The sequence spans 156 residues: Ribonuclease H (156 aa).

Positions 7 to 148 (QDKIVMIATD…ADQLASDAAI (142 aa)) constitute an RNase H type-1 domain. Mg(2+)-binding residues include Asp-16, Glu-54, Asp-76, and Asp-140.

It belongs to the RNase H family. In terms of assembly, monomer. Mg(2+) serves as cofactor.

The protein localises to the cytoplasm. The catalysed reaction is Endonucleolytic cleavage to 5'-phosphomonoester.. Functionally, endonuclease that specifically degrades the RNA of RNA-DNA hybrids. This chain is Ribonuclease H (rnhA), found in Zymomonas mobilis subsp. mobilis (strain ATCC 31821 / ZM4 / CP4).